A 222-amino-acid polypeptide reads, in one-letter code: Glutathione S-transferase alpha-2 (222 aa).

One can recognise a GST N-terminal domain in the interval Gly-3–Gly-83. The residue at position 4 (Lys-4) is an N6-succinyllysine. Glutathione-binding positions include Tyr-9, Lys-45, Gln-54 to Val-55, and Gln-67 to Thr-68. The GST C-terminal domain maps to Asp-85–Met-208.

Belongs to the GST superfamily. Alpha family. Homodimer or heterodimer of GSTA1 and GSTA2.

It is found in the cytoplasm. The enzyme catalyses RX + glutathione = an S-substituted glutathione + a halide anion + H(+). Its function is as follows. Catalyzes the conjugation of glutathione to a large variety of electrophilic compounds. The protein is Glutathione S-transferase alpha-2 (Gsta2) of Rattus norvegicus (Rat).